The following is a 159-amino-acid chain: MNISIVVVGKIKEKYLKLGIDEFKKRLSKYCKLEIIELDDEKAPENLSVKEMEIIKDKEGKKILGKIKHNSYVIALAIDGKGLSSEELAKTMSDLAVRGNSSLCFIIGGSLGLSDEVLGRADYRLSFSRMTFPHQMMRLILLEQIYRAYRINNGEPYHK.

S-adenosyl-L-methionine-binding positions include Leu76, Gly108, and 127-132 (FSRMTF).

This sequence belongs to the RNA methyltransferase RlmH family. Homodimer.

The protein localises to the cytoplasm. It catalyses the reaction pseudouridine(1915) in 23S rRNA + S-adenosyl-L-methionine = N(3)-methylpseudouridine(1915) in 23S rRNA + S-adenosyl-L-homocysteine + H(+). In terms of biological role, specifically methylates the pseudouridine at position 1915 (m3Psi1915) in 23S rRNA. This chain is Ribosomal RNA large subunit methyltransferase H, found in Clostridioides difficile (strain 630) (Peptoclostridium difficile).